The primary structure comprises 303 residues: Methionyl-tRNA formyltransferase (303 aa).

(6S)-5,6,7,8-tetrahydrofolate is bound at residue 106–109 (SLLP).

This sequence belongs to the Fmt family.

It catalyses the reaction L-methionyl-tRNA(fMet) + (6R)-10-formyltetrahydrofolate = N-formyl-L-methionyl-tRNA(fMet) + (6S)-5,6,7,8-tetrahydrofolate + H(+). Functionally, attaches a formyl group to the free amino group of methionyl-tRNA(fMet). The formyl group appears to play a dual role in the initiator identity of N-formylmethionyl-tRNA by promoting its recognition by IF2 and preventing the misappropriation of this tRNA by the elongation apparatus. The protein is Methionyl-tRNA formyltransferase of Thermosipho melanesiensis (strain DSM 12029 / CIP 104789 / BI429).